We begin with the raw amino-acid sequence, 520 residues long: Nucleobase-ascorbate transporter 1 (520 aa).

12 consecutive transmembrane segments (helical) span residues 36–56 (YILMLGTSAFIPALLVPAMGG), 64–84 (VIQTLLFVAGIKTLLQALFGT), 86–106 (LPAVVGGSLAYVVPIAYIIND), 129–149 (ALIVASSIQIILGYSQVWGLF), 150–170 (SRFFSPLGMAPVVGLVGLGMF), 174–194 (FPQLGNCIEIGLPMLLLVIGL), 213–233 (FPILICVTIVWIYAVILTASG), 279–299 (FAMMSAVLVSMVESTGAYIAA), 362–382 (GFMIVFSTLGKFGAVFASIPV), 384–404 (IYAALHCILFGLVAAVGLSFL), 415–435 (LMITGLSLFLGISIPQFFAQY), and 453–473 (AFLNTLFMSPATVGLIIAVFM).

It belongs to the nucleobase:cation symporter-2 (NCS2) (TC 2.A.40) family. As to expression, expressed in cotyledons 4 days after imbibition (DAI). Expressed in the minor and major veins of cotyledons and leaves, in the shoot apex and pedicels. Expressed in the root meristems, root tips and lateral root primordia.

Its subcellular location is the membrane. In Arabidopsis thaliana (Mouse-ear cress), this protein is Nucleobase-ascorbate transporter 1 (NAT1).